Consider the following 232-residue polypeptide: Phosphatidylserine decarboxylase proenzyme (232 aa).

S190 acts as the Schiff-base intermediate with substrate; via pyruvic acid in catalysis. A Pyruvic acid (Ser); by autocatalysis modification is found at S190.

It belongs to the phosphatidylserine decarboxylase family. PSD-A subfamily. As to quaternary structure, heterodimer of a large membrane-associated beta subunit and a small pyruvoyl-containing alpha subunit. Pyruvate serves as cofactor. Is synthesized initially as an inactive proenzyme. Formation of the active enzyme involves a self-maturation process in which the active site pyruvoyl group is generated from an internal serine residue via an autocatalytic post-translational modification. Two non-identical subunits are generated from the proenzyme in this reaction, and the pyruvate is formed at the N-terminus of the alpha chain, which is derived from the carboxyl end of the proenzyme. The post-translation cleavage follows an unusual pathway, termed non-hydrolytic serinolysis, in which the side chain hydroxyl group of the serine supplies its oxygen atom to form the C-terminus of the beta chain, while the remainder of the serine residue undergoes an oxidative deamination to produce ammonia and the pyruvoyl prosthetic group on the alpha chain.

The protein resides in the cell membrane. The catalysed reaction is a 1,2-diacyl-sn-glycero-3-phospho-L-serine + H(+) = a 1,2-diacyl-sn-glycero-3-phosphoethanolamine + CO2. The protein operates within phospholipid metabolism; phosphatidylethanolamine biosynthesis; phosphatidylethanolamine from CDP-diacylglycerol: step 2/2. In terms of biological role, catalyzes the formation of phosphatidylethanolamine (PtdEtn) from phosphatidylserine (PtdSer). The polypeptide is Phosphatidylserine decarboxylase proenzyme (Cereibacter sphaeroides (strain ATCC 17023 / DSM 158 / JCM 6121 / CCUG 31486 / LMG 2827 / NBRC 12203 / NCIMB 8253 / ATH 2.4.1.) (Rhodobacter sphaeroides)).